The primary structure comprises 707 residues: Leucine-rich repeat neuronal protein 3 (707 aa).

A signal peptide spans 1–22 (MKDAPLQIHVLLGLAITALVQA). In terms of domain architecture, LRRNT spans 23-69 (GDKKVDCPQLCTCEIRPWFTPRSIYMEASTVDCNDLGLLNFPARLPA). The Extracellular portion of the chain corresponds to 23 to 626 (GDKKVDCPQL…DGKENGKSHT (604 aa)). LRR repeat units follow at residues 70 to 91 (DTQILLLQTNNIARIEHSTDFP), 93 to 114 (NLTGLDLSQNNLSSVTNINVQK), 117 to 138 (QLLSVYLEENKLTELPEKCLYG), 141 to 162 (NLQELYVNHNLLSAISPGAFVG), 165 to 186 (NLLRLHLNSNRLQMINSKWFEA), 189 to 210 (NLEILMLGDNPILRIKDMNFQP), 213 to 234 (KLRSLVIAGINLTEVPDDALVG), 237 to 258 (NLESISFYDNRLNKVPQVALQK), 261 to 282 (NLKFLDLNKNPINRIRRGDFSN), 285 to 304 (HLKELGINNMPELVSIDSLA), 310 to 332 (DLRKIEATNNPRLSYIHPNAFFR), and 335 to 358 (KLESLMLNSNALSALYHGTIESLP). N-linked (GlcNAc...) asparagine glycosylation is found at asparagine 93 and asparagine 103. Residue asparagine 223 is glycosylated (N-linked (GlcNAc...) asparagine). The LRRCT domain occupies 368-421 (NPIRCDCVIRWINMNKTNIRFMEPDSLFCVDPPEFQGQNVRQVHFRDMMEICLP). Asparagine 382 carries an N-linked (GlcNAc...) asparagine glycan. Residues 421-514 (PLIAPESFPS…DLKSIMIKVG (94 aa)) form the Ig-like C2-type domain. A disulfide bridge connects residues cysteine 444 and cysteine 496. N-linked (GlcNAc...) asparagine glycosylation is found at asparagine 522, asparagine 579, and asparagine 608. The 92-residue stretch at 523-614 (GSLNIKIRDI…QCVNVTTKSL (92 aa)) folds into the Fibronectin type-III domain. Residues 627 to 647 (VFVACVGGLLGIIGVMCLFGC) form a helical membrane-spanning segment. The Cytoplasmic portion of the chain corresponds to 648 to 707 (VSQEGNCENEHSYTVNHCHKPTLAFSELYPPLINLWESSKEKPASLEVKATAIGVPTSMS).

It is found in the membrane. In Rattus norvegicus (Rat), this protein is Leucine-rich repeat neuronal protein 3 (Lrrn3).